A 265-amino-acid polypeptide reads, in one-letter code: Hydroxyethylthiazole kinase (265 aa).

Substrate is bound at residue methionine 43. Residues lysine 118 and threonine 165 each coordinate ATP. Glycine 192 provides a ligand contact to substrate.

This sequence belongs to the Thz kinase family. Mg(2+) serves as cofactor.

The enzyme catalyses 5-(2-hydroxyethyl)-4-methylthiazole + ATP = 4-methyl-5-(2-phosphooxyethyl)-thiazole + ADP + H(+). Its pathway is cofactor biosynthesis; thiamine diphosphate biosynthesis; 4-methyl-5-(2-phosphoethyl)-thiazole from 5-(2-hydroxyethyl)-4-methylthiazole: step 1/1. In terms of biological role, catalyzes the phosphorylation of the hydroxyl group of 4-methyl-5-beta-hydroxyethylthiazole (THZ). In Pyrococcus horikoshii (strain ATCC 700860 / DSM 12428 / JCM 9974 / NBRC 100139 / OT-3), this protein is Hydroxyethylthiazole kinase.